The primary structure comprises 384 residues: Chaperone protein DnaJ (384 aa).

Positions 4 to 68 (DFYDVLGVSR…EKRQMYDQLG (65 aa)) constitute a J domain. 2 disordered regions span residues 74 to 105 (QAQK…GMGG) and 113 to 132 (NNLF…QGRD). Residues 79–105 (GAGGGGGGRGQGNPFGGGGNPFGGMGG) are compositionally biased toward gly residues. The CR-type zinc-finger motif lies at 147-229 (GVERDVTIRR…CRGSGRVRRT (83 aa)). Zn(2+) contacts are provided by Cys-160, Cys-163, Cys-177, Cys-180, Cys-203, Cys-206, Cys-217, and Cys-220. CXXCXGXG motif repeat units follow at residues 160–167 (CPECDGEG), 177–184 (CSECNGSG), 203–210 (CRACGGEG), and 217–224 (CSECRGSG).

The protein belongs to the DnaJ family. As to quaternary structure, homodimer. Zn(2+) serves as cofactor.

The protein resides in the cytoplasm. Participates actively in the response to hyperosmotic and heat shock by preventing the aggregation of stress-denatured proteins and by disaggregating proteins, also in an autonomous, DnaK-independent fashion. Unfolded proteins bind initially to DnaJ; upon interaction with the DnaJ-bound protein, DnaK hydrolyzes its bound ATP, resulting in the formation of a stable complex. GrpE releases ADP from DnaK; ATP binding to DnaK triggers the release of the substrate protein, thus completing the reaction cycle. Several rounds of ATP-dependent interactions between DnaJ, DnaK and GrpE are required for fully efficient folding. Also involved, together with DnaK and GrpE, in the DNA replication of plasmids through activation of initiation proteins. The protein is Chaperone protein DnaJ of Haloferax mediterranei (strain ATCC 33500 / DSM 1411 / JCM 8866 / NBRC 14739 / NCIMB 2177 / R-4) (Halobacterium mediterranei).